A 109-amino-acid polypeptide reads, in one-letter code: UPF0122 protein CLL_A1244 (109 aa).

The protein belongs to the UPF0122 family.

In terms of biological role, might take part in the signal recognition particle (SRP) pathway. This is inferred from the conservation of its genetic proximity to ftsY/ffh. May be a regulatory protein. This is UPF0122 protein CLL_A1244 from Clostridium botulinum (strain Eklund 17B / Type B).